The sequence spans 346 residues: Autophagy-related protein 3 (346 aa).

The flexible region stretch occupies residues 85 to 161 (DFAGDAGHEE…DDDDEAIIRA (77 aa)). Cys-238 functions as the Glycyl thioester intermediate in the catalytic mechanism. A handle region region spans residues 242–322 (SVMKTLLDRA…DQEVAIRVDQ (81 aa)).

This sequence belongs to the ATG3 family. In terms of assembly, monomer. Interacts with apg-6/atg8 through an intermediate thioester bond through the C-terminal Gly of apg-6/atg8. Also interacts with the 40 amino acid C-terminal region of the E1-like apg-5/atg7 enzyme. Also interacts with the atg12-apg-4/atg5 conjugate.

The protein resides in the cytoplasm. E2 conjugating enzyme required for the cytoplasm to vacuole transport (Cvt) and autophagy. Required for selective autophagic degradation of the nucleus (nucleophagy) as well as for mitophagy which contributes to regulate mitochondrial quantity and quality by eliminating the mitochondria to a basal level to fulfill cellular energy requirements and preventing excess ROS production. Responsible for the E2-like covalent binding of phosphatidylethanolamine to the C-terminal Gly of apg-6/atg8. The atg12-apg-4/atg5 conjugate plays a role of an E3 and promotes the transfer of apg-6/atg8 from apg-3/atg3 to phosphatidylethanolamine (PE). This step is required for the membrane association of apg-6/atg8. The formation of the apg-6/atg8-phosphatidylethanolamine conjugate is essential for autophagy and for the cytoplasm to vacuole transport (Cvt). The apg-6/atg8-PE conjugate mediates tethering between adjacent membranes and stimulates membrane hemifusion, leading to expansion of the autophagosomal membrane during autophagy. This Neurospora crassa (strain ATCC 24698 / 74-OR23-1A / CBS 708.71 / DSM 1257 / FGSC 987) protein is Autophagy-related protein 3 (apg-3).